The chain runs to 108 residues: MVASCKDQKKAVAICLQRSPCVMIERHNPQECLDNPELNKDLPELCIAQMKAFLDCKRGIVDMTKRFTGNAPLSTGKYDQQYENLCKGKFDPREEMEKLKLLNSQQKD.

Residues 18–64 (RSPCVMIERHNPQECLDNPELNKDLPELCIAQMKAFLDCKRGIVDMT) form the CHCH domain. The short motif at 21–32 (CVMIERHNPQEC) is the Cx10C motif element. 2 disulfide bridges follow: Cys21-Cys56 and Cys32-Cys46. The Cx9C motif signature appears at 46–56 (CIAQMKAFLDC).

It belongs to the PET191 family.

It localises to the mitochondrion intermembrane space. Its function is as follows. Involved in the assembly of cytochrome c oxidase. The polypeptide is Mitochondrial protein PET191 (PET191) (Saccharomyces cerevisiae (strain ATCC 204508 / S288c) (Baker's yeast)).